The primary structure comprises 1020 residues: Calcium-transporting ATPase 10, plasma membrane-type (1020 aa).

Residues Met-1–Thr-175 are Cytoplasmic-facing. The segment at Ala-21 to Val-32 is interaction with calmodulin. The next 2 helical transmembrane spans lie at Leu-176 to Trp-196 and Gly-199 to Thr-219. The Cytoplasmic segment spans residues Ser-220 to His-263. A run of 2 helical transmembrane segments spans residues Leu-264 to Ile-284 and Gly-352 to Leu-372. The Cytoplasmic portion of the chain corresponds to Ser-373–His-400. A helical transmembrane segment spans residues Phe-401–Thr-421. The active-site 4-aspartylphosphate intermediate is Asp-456. Mg(2+) is bound by residues Asp-758 and Asp-762. A helical transmembrane segment spans residues Leu-843–Leu-863. At Ala-864–Asn-887 the chain is on the cytoplasmic side. The next 2 helical transmembrane spans lie at Val-888–Leu-907 and Val-924–Ser-944. At Ser-945–Tyr-961 the chain is on the cytoplasmic side. 2 helical membrane passes run Val-962–Gly-982 and Trp-995–Leu-1015. Topologically, residues Pro-1016–Ser-1020 are cytoplasmic.

This sequence belongs to the cation transport ATPase (P-type) (TC 3.A.3) family. Type IIB subfamily.

It localises to the membrane. It carries out the reaction Ca(2+)(in) + ATP + H2O = Ca(2+)(out) + ADP + phosphate + H(+). Its activity is regulated as follows. Activated by calmodulin. Functionally, this magnesium-dependent enzyme catalyzes the hydrolysis of ATP coupled with the translocation of calcium from the cytosol out of the cell, into the endoplasmic reticulum, or into organelles. The protein is Calcium-transporting ATPase 10, plasma membrane-type of Oryza sativa subsp. japonica (Rice).